Consider the following 186-residue polypeptide: ATP synthase subunit delta (186 aa).

This sequence belongs to the ATPase delta chain family. F-type ATPases have 2 components, F(1) - the catalytic core - and F(0) - the membrane proton channel. F(1) has five subunits: alpha(3), beta(3), gamma(1), delta(1), epsilon(1). F(0) has three main subunits: a(1), b(2) and c(10-14). The alpha and beta chains form an alternating ring which encloses part of the gamma chain. F(1) is attached to F(0) by a central stalk formed by the gamma and epsilon chains, while a peripheral stalk is formed by the delta and b chains.

It is found in the cell inner membrane. Functionally, f(1)F(0) ATP synthase produces ATP from ADP in the presence of a proton or sodium gradient. F-type ATPases consist of two structural domains, F(1) containing the extramembraneous catalytic core and F(0) containing the membrane proton channel, linked together by a central stalk and a peripheral stalk. During catalysis, ATP synthesis in the catalytic domain of F(1) is coupled via a rotary mechanism of the central stalk subunits to proton translocation. Its function is as follows. This protein is part of the stalk that links CF(0) to CF(1). It either transmits conformational changes from CF(0) to CF(1) or is implicated in proton conduction. The sequence is that of ATP synthase subunit delta from Nitrobacter hamburgensis (strain DSM 10229 / NCIMB 13809 / X14).